The sequence spans 100 residues: Co-chaperonin GroES (100 aa).

It belongs to the GroES chaperonin family. Heptamer of 7 subunits arranged in a ring. Interacts with the chaperonin GroEL.

Its subcellular location is the cytoplasm. Together with the chaperonin GroEL, plays an essential role in assisting protein folding. The GroEL-GroES system forms a nano-cage that allows encapsulation of the non-native substrate proteins and provides a physical environment optimized to promote and accelerate protein folding. GroES binds to the apical surface of the GroEL ring, thereby capping the opening of the GroEL channel. The chain is Co-chaperonin GroES from Mycobacterium marinum (strain ATCC BAA-535 / M).